The primary structure comprises 276 residues: Hydroxycinnamoyl-CoA hydratase-lyase (276 aa).

4 residues coordinate acetyl-CoA: Lys29, Ala68, Met70, and Leu72. Vanillin is bound at residue Tyr75. Positions 120, 142, and 146 each coordinate acetyl-CoA. Residues Gly151 and Tyr239 each contribute to the vanillin site.

Belongs to the enoyl-CoA hydratase/isomerase family. Homohexamer; dimer of trimers.

The enzyme catalyses (E)-feruloyl-CoA + H2O = vanillin + acetyl-CoA. The catalysed reaction is (E)-caffeoyl-CoA + H2O = 3,4-dihydroxybenzaldehyde + acetyl-CoA. It carries out the reaction (E)-4-coumaroyl-CoA + H2O = 4-hydroxybenzaldehyde + acetyl-CoA. It catalyses the reaction (E)-feruloyl-CoA + H2O = 3-hydroxy-3-(4-hydroxy-3-methoxyphenyl)propanoyl-CoA. The enzyme catalyses 3-hydroxy-3-(4-hydroxy-3-methoxyphenyl)propanoyl-CoA = vanillin + acetyl-CoA. The catalysed reaction is (E)-caffeoyl-CoA + H2O = 3-hydroxy-3-(3,4-dihydroxyphenyl)propanoyl-CoA. It carries out the reaction 3-hydroxy-3-(3,4-dihydroxyphenyl)propanoyl-CoA = 3,4-dihydroxybenzaldehyde + acetyl-CoA. It catalyses the reaction (E)-4-coumaroyl-CoA + H2O = 3-hydroxy-3-(4-hydroxyphenyl)propanoyl-CoA. The enzyme catalyses 3-hydroxy-3-(4-hydroxyphenyl)propanoyl-CoA = 4-hydroxybenzaldehyde + acetyl-CoA. Catalyzes the hydration of the acyl-CoA thioester of ferulic acid and the subsequent retro-aldol cleavage of the hydrated intermediate to yield vanillin (4-hydroxy-3-methoxy-benzaldehyde). The enzyme is also active with caffeoyl-CoA and 4-coumaroyl-CoA producing 3,4-dihydroxybenzaldehyde and 4-hydroxybenzaldehyde, respectively. In Pseudomonas fluorescens, this protein is Hydroxycinnamoyl-CoA hydratase-lyase.